Here is a 289-residue protein sequence, read N- to C-terminus: Probable endonuclease 4 (289 aa).

The Zn(2+) site is built by His-74, His-115, Glu-150, Asp-184, His-187, His-218, Asp-231, His-233, and Glu-263.

Belongs to the AP endonuclease 2 family. Zn(2+) is required as a cofactor.

The catalysed reaction is Endonucleolytic cleavage to 5'-phosphooligonucleotide end-products.. Endonuclease IV plays a role in DNA repair. It cleaves phosphodiester bonds at apurinic or apyrimidinic (AP) sites, generating a 3'-hydroxyl group and a 5'-terminal sugar phosphate. This is Probable endonuclease 4 from Mycoplasma capricolum subsp. capricolum (strain California kid / ATCC 27343 / NCTC 10154).